The primary structure comprises 604 residues: Linalool synthase Tps-5073L4, chloroplastic (604 aa).

The transit peptide at 1-36 (MSSMRIYVAIMKKPSVKHVDYVDKKASKPSWRVSSS) directs the protein to the chloroplast. Residues arginine 323, aspartate 360, aspartate 364, arginine 501, and aspartate 504 each coordinate (2E)-geranyl diphosphate. Residues aspartate 360 and aspartate 364 each coordinate Mg(2+). Positions 360-364 (DDVYD) match the DDXXD motif motif. 3 residues coordinate Mg(2+): aspartate 504, threonine 508, and glutamate 512.

Belongs to the terpene synthase family. Tpsb subfamily. As to quaternary structure, monomer. Mg(2+) is required as a cofactor. It depends on Mn(2+) as a cofactor.

It is found in the plastid. It localises to the chloroplast. The catalysed reaction is (2E)-geranyl diphosphate + H2O = linalool + diphosphate. Its pathway is secondary metabolite biosynthesis; terpenoid biosynthesis. In terms of biological role, monoterpene synthase (mono-TPS) involved in the biosynthesis of monoterpenes natural products. Catalyzes the conversion of (2E)-geranyl diphosphate (GPP) into linalool. This chain is Linalool synthase Tps-5073L4, chloroplastic, found in Perilla frutescens (Beefsteak mint).